A 213-amino-acid polypeptide reads, in one-letter code: Alkylbase DNA glycosidase-like protein mag2 (213 aa).

Residues lysine 53, leucine 54, serine 61, histidine 91, glycine 94, serine 96, lysine 97, lysine 99, glutamate 102, lysine 137, glycine 138, lysine 140, threonine 143, serine 163, and threonine 164 each coordinate DNA.

It belongs to the alkylbase DNA glycosidase AlkA family.

The protein resides in the nucleus. In terms of biological role, alkylbase DNA glycosidase-like protein that shows no DNA glycosylase activity for alkylated bases. The molecular role of mag2 appears to be abasic (AP) site recognition and protection, while possibly facilitating damage signaling by structurally sculpting the DNA substrate. Stimulates AP site binding to mismatch repair protein mutS. The chain is Alkylbase DNA glycosidase-like protein mag2 from Schizosaccharomyces pombe (strain 972 / ATCC 24843) (Fission yeast).